The primary structure comprises 183 residues: Probable chorismate pyruvate-lyase (183 aa).

3 residues coordinate substrate: R79, L115, and E168.

The protein belongs to the UbiC family.

It is found in the cytoplasm. It catalyses the reaction chorismate = 4-hydroxybenzoate + pyruvate. It participates in cofactor biosynthesis; ubiquinone biosynthesis. Functionally, removes the pyruvyl group from chorismate, with concomitant aromatization of the ring, to provide 4-hydroxybenzoate (4HB) for the ubiquinone pathway. The chain is Probable chorismate pyruvate-lyase from Chromohalobacter salexigens (strain ATCC BAA-138 / DSM 3043 / CIP 106854 / NCIMB 13768 / 1H11).